A 270-amino-acid chain; its full sequence is Glutamate racemase (270 aa).

Residues 7-8 (DS) and 39-40 (YG) contribute to the substrate site. The Proton donor/acceptor role is filled by Cys70. 71-72 (NT) contacts substrate. The Proton donor/acceptor role is filled by Cys194. 195–196 (TH) contacts substrate.

Belongs to the aspartate/glutamate racemases family.

It catalyses the reaction L-glutamate = D-glutamate. It participates in cell wall biogenesis; peptidoglycan biosynthesis. Functionally, provides the (R)-glutamate required for cell wall biosynthesis. The chain is Glutamate racemase from Cereibacter sphaeroides (strain ATCC 17025 / ATH 2.4.3) (Rhodobacter sphaeroides).